Consider the following 204-residue polypeptide: Large ribosomal subunit protein uL4 (204 aa).

The interval 49 to 75 (TKGRSEVSGGGKKPWRQKGRGGARAGS) is disordered.

The protein belongs to the universal ribosomal protein uL4 family. In terms of assembly, part of the 50S ribosomal subunit.

Functionally, one of the primary rRNA binding proteins, this protein initially binds near the 5'-end of the 23S rRNA. It is important during the early stages of 50S assembly. It makes multiple contacts with different domains of the 23S rRNA in the assembled 50S subunit and ribosome. Forms part of the polypeptide exit tunnel. This chain is Large ribosomal subunit protein uL4, found in Campylobacter hominis (strain ATCC BAA-381 / DSM 21671 / CCUG 45161 / LMG 19568 / NCTC 13146 / CH001A).